The following is a 401-amino-acid chain: Exodeoxyribonuclease 7 large subunit (401 aa).

Belongs to the XseA family. As to quaternary structure, heterooligomer composed of large and small subunits.

It localises to the cytoplasm. It carries out the reaction Exonucleolytic cleavage in either 5'- to 3'- or 3'- to 5'-direction to yield nucleoside 5'-phosphates.. In terms of biological role, bidirectionally degrades single-stranded DNA into large acid-insoluble oligonucleotides, which are then degraded further into small acid-soluble oligonucleotides. The protein is Exodeoxyribonuclease 7 large subunit of Thermoanaerobacter sp. (strain X514).